A 711-amino-acid polypeptide reads, in one-letter code: MLNPIVRKFQYGQHTVTLETGMMARQATAAVMVSMDDTAVFVTVVGQKKAKPGQDFFPLTVNYQERTYAAGRIPGSFFRREGRPSEGETLIARLIDRPVRPLFPEGFVNEVQVIATVVSVNPQVNPDIVAMIGASAALSLSGIPFNGPIGAARVGYINDQYVLNPTQDELKESKLDLVVAGTEAAVLMVESEAELLSEDTMLGAVVFGHEQQQVVIQAINDLVKEAGKPRWDWQPEAVNDALNARVAALAESRLSDAYRITDKQERYAQVDVIKSETIDQLTAEDDTLDANELGEILHAIEKNVVRSRVLAGEPRIDGREKDMIRGLDVRTGVLPRTHGSALFTRGETQALVTATLGTARDAQVLDELMGERTDSFLFHYNFPPYSVGETGMVGSPKRREIGHGRLAKRGVLAVMPDMDKFPYTVRVVSEITESNGSSSMASVCGASLALMDAGVPIKAAVAGIAMGLVKEGDNYVVLSDILGDEDHLGDMDFKVAGSREGISALQMDIKIEGITKEIMQVALNQAKGARLHILGVMEQAINAPRGDISEFAPRIHTIKISTDKIKDVIGKGGSVIRALTEETGTTIEIEDDGTVKIAATDGEKAKYAIRRIEEITAEIEVGRIYNGKVTRIVDFGAFVAIGGGKEGLVHISQIADKRVEKVTDYLQMGQEVPVKVLEVDRQGRVRLSIKEATEQTQPAAAPEAPTSEQGE.

Asp-486 and Asp-492 together coordinate Mg(2+). The KH domain occupies 553-612 (PRIHTIKISTDKIKDVIGKGGSVIRALTEETGTTIEIEDDGTVKIAATDGEKAKYAIRRI). In terms of domain architecture, S1 motif spans 622–690 (GRIYNGKVTR…RQGRVRLSIK (69 aa)). The disordered stretch occupies residues 689-711 (IKEATEQTQPAAAPEAPTSEQGE). The segment covering 694–711 (EQTQPAAAPEAPTSEQGE) has biased composition (low complexity).

This sequence belongs to the polyribonucleotide nucleotidyltransferase family. As to quaternary structure, component of the RNA degradosome, which is a multiprotein complex involved in RNA processing and mRNA degradation. Requires Mg(2+) as cofactor.

The protein resides in the cytoplasm. The enzyme catalyses RNA(n+1) + phosphate = RNA(n) + a ribonucleoside 5'-diphosphate. Its function is as follows. Involved in mRNA degradation. Catalyzes the phosphorolysis of single-stranded polyribonucleotides processively in the 3'- to 5'-direction. The polypeptide is Polyribonucleotide nucleotidyltransferase (Salmonella arizonae (strain ATCC BAA-731 / CDC346-86 / RSK2980)).